A 401-amino-acid polypeptide reads, in one-letter code: 8-amino-7-oxononanoate synthase (401 aa).

Arginine 24 contributes to the substrate binding site. 111-112 (GF) provides a ligand contact to pyridoxal 5'-phosphate. Histidine 137 is a substrate binding site. Serine 183, histidine 211, and threonine 240 together coordinate pyridoxal 5'-phosphate. Lysine 243 carries the post-translational modification N6-(pyridoxal phosphate)lysine. Threonine 357 contacts substrate.

It belongs to the class-II pyridoxal-phosphate-dependent aminotransferase family. BioF subfamily. In terms of assembly, homodimer. It depends on pyridoxal 5'-phosphate as a cofactor.

It carries out the reaction 6-carboxyhexanoyl-[ACP] + L-alanine + H(+) = (8S)-8-amino-7-oxononanoate + holo-[ACP] + CO2. It participates in cofactor biosynthesis; biotin biosynthesis. Its function is as follows. Catalyzes the decarboxylative condensation of pimeloyl-[acyl-carrier protein] and L-alanine to produce 8-amino-7-oxononanoate (AON), [acyl-carrier protein], and carbon dioxide. The chain is 8-amino-7-oxononanoate synthase from Xanthomonas oryzae pv. oryzae (strain MAFF 311018).